The chain runs to 413 residues: Serine hydroxymethyltransferase (413 aa).

(6S)-5,6,7,8-tetrahydrofolate contacts are provided by residues Leu-119 and 123–125 (GHL). Residue Lys-228 is modified to N6-(pyridoxal phosphate)lysine. A (6S)-5,6,7,8-tetrahydrofolate-binding site is contributed by 351 to 353 (SPF).

It belongs to the SHMT family. As to quaternary structure, homodimer. Pyridoxal 5'-phosphate serves as cofactor.

It is found in the cytoplasm. It carries out the reaction (6R)-5,10-methylene-5,6,7,8-tetrahydrofolate + glycine + H2O = (6S)-5,6,7,8-tetrahydrofolate + L-serine. The protein operates within one-carbon metabolism; tetrahydrofolate interconversion. Its pathway is amino-acid biosynthesis; glycine biosynthesis; glycine from L-serine: step 1/1. Catalyzes the reversible interconversion of serine and glycine with tetrahydrofolate (THF) serving as the one-carbon carrier. This reaction serves as the major source of one-carbon groups required for the biosynthesis of purines, thymidylate, methionine, and other important biomolecules. Also exhibits THF-independent aldolase activity toward beta-hydroxyamino acids, producing glycine and aldehydes, via a retro-aldol mechanism. In Anoxybacillus flavithermus (strain DSM 21510 / WK1), this protein is Serine hydroxymethyltransferase.